Reading from the N-terminus, the 544-residue chain is Chaperonin GroEL 3 (544 aa).

ATP contacts are provided by residues 30–33, Lys-51, 87–91, Gly-415, and Asp-495; these read TLGP and DGTTT.

This sequence belongs to the chaperonin (HSP60) family. In terms of assembly, forms a cylinder of 14 subunits composed of two heptameric rings stacked back-to-back. Interacts with the co-chaperonin GroES.

The protein resides in the cytoplasm. It catalyses the reaction ATP + H2O + a folded polypeptide = ADP + phosphate + an unfolded polypeptide.. Its function is as follows. Together with its co-chaperonin GroES, plays an essential role in assisting protein folding. The GroEL-GroES system forms a nano-cage that allows encapsulation of the non-native substrate proteins and provides a physical environment optimized to promote and accelerate protein folding. This chain is Chaperonin GroEL 3, found in Psychromonas ingrahamii (strain DSM 17664 / CCUG 51855 / 37).